Reading from the N-terminus, the 1109-residue chain is Carbamoyl phosphate synthase large chain (1109 aa).

Residues 1 to 402 (MPRRTDLTSV…ALQKAMRSID (402 aa)) form a carboxyphosphate synthetic domain region. ATP is bound by residues Arg-129, Arg-169, Gly-175, Gly-176, Glu-208, Ile-210, Glu-215, Gly-241, Val-242, His-243, Gln-285, and Glu-299. Positions 133–328 (KGVVERCGAE…IAKIAARLAV (196 aa)) constitute an ATP-grasp 1 domain. Mg(2+) contacts are provided by Gln-285, Glu-299, and Asn-301. Residues Gln-285, Glu-299, and Asn-301 each contribute to the Mn(2+) site. Residues 403–548 (KAGSTFHWRG…YHYSSYDAET (146 aa)) form an oligomerization domain region. Residues 549–956 (EVQPRDRPAV…AFAKSQAAAY (408 aa)) form a carbamoyl phosphate synthetic domain region. The ATP-grasp 2 domain maps to 678-876 (GEVLVAAGLP…LAKAASLLMA (199 aa)). ATP is bound by residues Arg-714, Arg-760, Leu-762, Glu-767, Gly-792, Ile-793, His-794, Ser-795, Gln-835, and Glu-847. 3 residues coordinate Mg(2+): Gln-835, Glu-847, and Asn-849. Positions 835, 847, and 849 each coordinate Mn(2+). Residues 957–1102 (GGLPTSGRVF…QEHDAARAAR (146 aa)) form the MGS-like domain. The allosteric domain stretch occupies residues 957–1109 (GGLPTSGRVF…AARETEGVHA (153 aa)).

The protein belongs to the CarB family. As to quaternary structure, composed of two chains; the small (or glutamine) chain promotes the hydrolysis of glutamine to ammonia, which is used by the large (or ammonia) chain to synthesize carbamoyl phosphate. Tetramer of heterodimers (alpha,beta)4. Mg(2+) is required as a cofactor. Requires Mn(2+) as cofactor.

It carries out the reaction hydrogencarbonate + L-glutamine + 2 ATP + H2O = carbamoyl phosphate + L-glutamate + 2 ADP + phosphate + 2 H(+). It catalyses the reaction hydrogencarbonate + NH4(+) + 2 ATP = carbamoyl phosphate + 2 ADP + phosphate + 2 H(+). Its pathway is amino-acid biosynthesis; L-arginine biosynthesis; carbamoyl phosphate from bicarbonate: step 1/1. The protein operates within pyrimidine metabolism; UMP biosynthesis via de novo pathway; (S)-dihydroorotate from bicarbonate: step 1/3. Its function is as follows. Large subunit of the glutamine-dependent carbamoyl phosphate synthetase (CPSase). CPSase catalyzes the formation of carbamoyl phosphate from the ammonia moiety of glutamine, carbonate, and phosphate donated by ATP, constituting the first step of 2 biosynthetic pathways, one leading to arginine and/or urea and the other to pyrimidine nucleotides. The large subunit (synthetase) binds the substrates ammonia (free or transferred from glutamine from the small subunit), hydrogencarbonate and ATP and carries out an ATP-coupled ligase reaction, activating hydrogencarbonate by forming carboxy phosphate which reacts with ammonia to form carbamoyl phosphate. In Beutenbergia cavernae (strain ATCC BAA-8 / DSM 12333 / CCUG 43141 / JCM 11478 / NBRC 16432 / NCIMB 13614 / HKI 0122), this protein is Carbamoyl phosphate synthase large chain.